The sequence spans 386 residues: Synaptotagmin-5 (386 aa).

Pro residues predominate over residues 1-16 (MFPEPPTPGPPSPDTP). Residues 1–23 (MFPEPPTPGPPSPDTPPDSSRIS) are disordered. Topologically, residues 1 to 24 (MFPEPPTPGPPSPDTPPDSSRISH) are vesicular. A helical transmembrane segment spans residues 25-45 (GPVPPWALATIVLVSGLLIFS). Residues 46–386 (CCFCLYRKSC…PDRVRLLPAP (341 aa)) lie on the Cytoplasmic side of the membrane. C2 domains lie at 108–227 (ELGR…QAWR) and 239–372 (KLGD…AQWH). Ca(2+) contacts are provided by Leu-138, Asp-139, Asp-145, Asp-197, Phe-198, Asp-199, Ser-202, Asp-205, Asp-270, Asp-276, Asp-330, and Asp-332.

Belongs to the synaptotagmin family. As to quaternary structure, homodimer. Interacts with both alpha- and beta-tubulin. The cofactor is Ca(2+).

Its subcellular location is the cytoplasmic vesicle. The protein resides in the secretory vesicle. The protein localises to the synaptic vesicle membrane. It is found in the recycling endosome membrane. In terms of biological role, may be involved in Ca(2+)-dependent exocytosis of secretory vesicles through Ca(2+) and phospholipid binding to the C2 domain or may serve as Ca(2+) sensors in the process of vesicular trafficking and exocytosis. Regulates the Ca(2+)-dependent secretion of norepinephrine in PC12 cells. Required for export from the endocytic recycling compartment to the cell surface. The sequence is that of Synaptotagmin-5 (SYT5) from Homo sapiens (Human).